We begin with the raw amino-acid sequence, 132 residues long: Small ribosomal subunit protein uS8 (132 aa).

This sequence belongs to the universal ribosomal protein uS8 family. As to quaternary structure, part of the 30S ribosomal subunit. Contacts proteins S5 and S12.

In terms of biological role, one of the primary rRNA binding proteins, it binds directly to 16S rRNA central domain where it helps coordinate assembly of the platform of the 30S subunit. This chain is Small ribosomal subunit protein uS8, found in Brucella anthropi (strain ATCC 49188 / DSM 6882 / CCUG 24695 / JCM 21032 / LMG 3331 / NBRC 15819 / NCTC 12168 / Alc 37) (Ochrobactrum anthropi).